Here is a 694-residue protein sequence, read N- to C-terminus: Glycine--tRNA ligase beta subunit (694 aa).

This sequence belongs to the class-II aminoacyl-tRNA synthetase family. Tetramer of two alpha and two beta subunits.

It is found in the cytoplasm. It carries out the reaction tRNA(Gly) + glycine + ATP = glycyl-tRNA(Gly) + AMP + diphosphate. This Shewanella denitrificans (strain OS217 / ATCC BAA-1090 / DSM 15013) protein is Glycine--tRNA ligase beta subunit.